A 976-amino-acid polypeptide reads, in one-letter code: R3H domain-containing protein 2 (976 aa).

Disordered regions lie at residues 32 to 71 (ISKTPSKEEIEKECEDTSLRQETQRRTSNHGHARKRAKSN) and 105 to 147 (ISCP…QEYT). The segment covering 36–56 (PSKEEIEKECEDTSLRQETQR) has biased composition (basic and acidic residues). The residue at position 37 (serine 37) is a Phosphoserine. Residues 58–71 (TSNHGHARKRAKSN) are compositionally biased toward basic residues. Over residues 109–143 (SDKEEEKSTKDVSEKEDKDKNKEKIPRKMLSRDSS) the composition is skewed to basic and acidic residues. Serine 143 is modified (phosphoserine). Residues 169-232 (RMMLLKLEQE…AVIINKTSNT (64 aa)) enclose the R3H domain. The 78-residue stretch at 233-310 (RIPEQRFSEH…NREGLSRTSS (78 aa)) folds into the SUZ domain. Over residues 257-269 (LKRDDASMDRDDN) the composition is skewed to basic and acidic residues. Disordered stretches follow at residues 257–376 (LKRD…ISRP), 401–457 (CTAQ…EAAD), 480–560 (ASTG…PGLQ), 661–725 (GTSP…PSMV), and 738–780 (RGQK…SLSS). Residues 306 to 317 (SRTSSSRQSSTD) are compositionally biased toward low complexity. Phosphoserine occurs at positions 330, 333, and 349. Low complexity predominate over residues 401–415 (CTAQQQQQQQQQQLP). 2 stretches are compositionally biased toward polar residues: residues 441–453 (PFGQMSLSRQGST) and 480–504 (ASTGQPLPTSNYSTSSHAPPTQQVL). Over residues 543–560 (SPQRGQQLPQPSQQPGLQ) the composition is skewed to low complexity. Pro residues predominate over residues 682–691 (SPSPCSPPQM). Over residues 692-714 (PQQYSGVSPSGPGVVVMQLNVPN) the composition is skewed to low complexity. Polar residues predominate over residues 748-758 (PDSSPQANTQM). A compositionally biased stretch (low complexity) spans 759 to 777 (SSSPVTSPTQSPAPSPVTS). Residues serine 853 and serine 855 each carry the phosphoserine modification. Threonine 856 and threonine 860 each carry phosphothreonine.

It localises to the nucleus. The protein is R3H domain-containing protein 2 (R3HDM2) of Homo sapiens (Human).